The primary structure comprises 492 residues: Bifunctional purine biosynthesis protein PurH (492 aa).

Positions 1 to 144 constitute an MGS-like domain; sequence MKKAILSVSN…KNYKHVTTIV (144 aa).

The protein belongs to the PurH family.

The enzyme catalyses (6R)-10-formyltetrahydrofolate + 5-amino-1-(5-phospho-beta-D-ribosyl)imidazole-4-carboxamide = 5-formamido-1-(5-phospho-D-ribosyl)imidazole-4-carboxamide + (6S)-5,6,7,8-tetrahydrofolate. It catalyses the reaction IMP + H2O = 5-formamido-1-(5-phospho-D-ribosyl)imidazole-4-carboxamide. Its pathway is purine metabolism; IMP biosynthesis via de novo pathway; 5-formamido-1-(5-phospho-D-ribosyl)imidazole-4-carboxamide from 5-amino-1-(5-phospho-D-ribosyl)imidazole-4-carboxamide (10-formyl THF route): step 1/1. It participates in purine metabolism; IMP biosynthesis via de novo pathway; IMP from 5-formamido-1-(5-phospho-D-ribosyl)imidazole-4-carboxamide: step 1/1. In Staphylococcus aureus (strain USA300), this protein is Bifunctional purine biosynthesis protein PurH.